Consider the following 439-residue polypeptide: Glutamate--tRNA ligase 2 (439 aa).

The short motif at 6-16 is the 'HIGH' region element; that stretch reads PSPTGDMHIGN. A 'KMSKS' region motif is present at residues 232-236; sequence KMSKR. Lysine 235 lines the ATP pocket.

Belongs to the class-I aminoacyl-tRNA synthetase family. Glutamate--tRNA ligase type 1 subfamily. In terms of assembly, monomer.

It localises to the cytoplasm. It carries out the reaction tRNA(Glu) + L-glutamate + ATP = L-glutamyl-tRNA(Glu) + AMP + diphosphate. Catalyzes the attachment of glutamate to tRNA(Glu) in a two-step reaction: glutamate is first activated by ATP to form Glu-AMP and then transferred to the acceptor end of tRNA(Glu). The sequence is that of Glutamate--tRNA ligase 2 from Helicobacter pylori (strain Shi470).